A 673-amino-acid chain; its full sequence is UvrABC system protein B (673 aa).

The Helicase ATP-binding domain maps to 24–182 (EGVERNDPAQ…YSFVEILYNR (159 aa)). Residue 37–44 (GVTGSGKT) coordinates ATP. The Beta-hairpin motif lies at 90–113 (YYDYYQPEAFMPTSGLYIEKDLAI). A Helicase C-terminal domain is found at 429 to 591 (QIDDLLDEIQ…ITPITVNKSK (163 aa)). The UVR domain occupies 634–669 (TKMIDRAKKDMDKAAKDLDFVEAARYRDEMFALQKI).

Belongs to the UvrB family. Forms a heterotetramer with UvrA during the search for lesions. Interacts with UvrC in an incision complex.

The protein resides in the cytoplasm. Its function is as follows. The UvrABC repair system catalyzes the recognition and processing of DNA lesions. A damage recognition complex composed of 2 UvrA and 2 UvrB subunits scans DNA for abnormalities. Upon binding of the UvrA(2)B(2) complex to a putative damaged site, the DNA wraps around one UvrB monomer. DNA wrap is dependent on ATP binding by UvrB and probably causes local melting of the DNA helix, facilitating insertion of UvrB beta-hairpin between the DNA strands. Then UvrB probes one DNA strand for the presence of a lesion. If a lesion is found the UvrA subunits dissociate and the UvrB-DNA preincision complex is formed. This complex is subsequently bound by UvrC and the second UvrB is released. If no lesion is found, the DNA wraps around the other UvrB subunit that will check the other stand for damage. The protein is UvrABC system protein B of Cytophaga hutchinsonii (strain ATCC 33406 / DSM 1761 / CIP 103989 / NBRC 15051 / NCIMB 9469 / D465).